A 173-amino-acid chain; its full sequence is uncharacterized protein (173 aa).

This sequence belongs to the ycf73 family.

It is found in the plastid. Its subcellular location is the chloroplast. This is an uncharacterized protein from Saccharum hybrid (Sugarcane).